A 162-amino-acid chain; its full sequence is Interleukin-2 (162 aa).

The signal sequence occupies residues 1 to 20 (MYKIQLLSCIALTLALVANG). O-linked (GalNAc...) threonine glycosylation is present at Thr23. N-linked (GlcNAc...) asparagine glycosylation occurs at Asn70. Cys79 and Cys134 are disulfide-bonded.

This sequence belongs to the IL-2 family.

Its subcellular location is the secreted. Its function is as follows. Cytokine produced by activated CD4-positive helper T-cells and to a lesser extend activated CD8-positive T-cells and natural killer (NK) cells that plays pivotal roles in the immune response and tolerance. Binds to a receptor complex composed of either the high-affinity trimeric IL-2R (IL2RA/CD25, IL2RB/CD122 and IL2RG/CD132) or the low-affinity dimeric IL-2R (IL2RB and IL2RG). Interaction with the receptor leads to oligomerization and conformation changes in the IL-2R subunits resulting in downstream signaling starting with phosphorylation of JAK1 and JAK3. In turn, JAK1 and JAK3 phosphorylate the receptor to form a docking site leading to the phosphorylation of several substrates including STAT5. This process leads to activation of several pathways including STAT, phosphoinositide-3-kinase/PI3K and mitogen-activated protein kinase/MAPK pathways. Functions as a T-cell growth factor and can increase NK-cell cytolytic activity as well. Promotes strong proliferation of activated B-cells and subsequently immunoglobulin production. Plays a pivotal role in regulating the adaptive immune system by controlling the survival and proliferation of regulatory T-cells, which are required for the maintenance of immune tolerance. Moreover, participates in the differentiation and homeostasis of effector T-cell subsets, including Th1, Th2, Th17 as well as memory CD8-positive T-cells. This chain is Interleukin-2 (IL2), found in Cervus elaphus (Red deer).